The primary structure comprises 448 residues: Phosphoglucosamine mutase (448 aa).

Residue Ser-100 is the Phosphoserine intermediate of the active site. Mg(2+) is bound by residues Ser-100, Asp-240, Asp-242, and Asp-244. At Ser-100 the chain carries Phosphoserine.

The protein belongs to the phosphohexose mutase family. Mg(2+) serves as cofactor. Activated by phosphorylation.

It catalyses the reaction alpha-D-glucosamine 1-phosphate = D-glucosamine 6-phosphate. Its function is as follows. Catalyzes the conversion of glucosamine-6-phosphate to glucosamine-1-phosphate. The polypeptide is Phosphoglucosamine mutase (Bacillus cytotoxicus (strain DSM 22905 / CIP 110041 / 391-98 / NVH 391-98)).